Here is a 304-residue protein sequence, read N- to C-terminus: 15-cis-phytoene synthase (304 aa).

This sequence belongs to the phytoene/squalene synthase family. Requires ATP as cofactor. Mn(2+) is required as a cofactor. Mg(2+) serves as cofactor.

The enzyme catalyses 2 (2E,6E,10E)-geranylgeranyl diphosphate = 15-cis-phytoene + 2 diphosphate. It functions in the pathway carotenoid biosynthesis; astaxanthin biosynthesis. The protein operates within carotenoid biosynthesis; phytoene biosynthesis. Involved in the biosynthesis of carotenoids for the production of astaxanthin. Catalyzes the condensation of two molecules of geranylgeranyl diphosphate (GGPP) to give prephytoene diphosphate (PPPP) and the subsequent rearrangement of the cyclopropylcarbinyl intermediate to yield 15-cis phytoene. The protein is 15-cis-phytoene synthase (crtB) of Paracoccus sp. (strain N81106 / MBIC 01143) (Agrobacterium aurantiacum).